The following is a 159-amino-acid chain: Intron-encoded endonuclease ai4 (159 aa).

Belongs to the LAGLIDADG endonuclease family.

Its subcellular location is the mitochondrion. In terms of biological role, mitochondrial DNA endonuclease involved in intron homing. This chain is Intron-encoded endonuclease ai4 (ai4), found in Dictyostelium discoideum (Social amoeba).